We begin with the raw amino-acid sequence, 503 residues long: D-xylose-proton symporter-like 2 (503 aa).

Positions 1-15 are enriched in polar residues; the sequence is MALDPEQQQPISSVS. Residues 1 to 32 form a disordered region; the sequence is MALDPEQQQPISSVSREFGKSSGEISPEREPL. A2 bears the N-acetylalanine mark. S26 is modified (phosphoserine). Helical transmembrane passes span 42–62, 99–119, 124–144, 146–166, 187–207, 213–233, 305–325, 346–366, 375–395, 400–420, 437–457, and 467–487; these read YSVV…LLYG, GSLY…DVIG, LILA…APTY, VLII…HAAP, FFIV…VNVH, MYAT…WLPA, ALII…PSVL, VSIL…VVID, LGGV…YLFF, VVAV…FGPI, GLSL…FAFS, and ILFC…FFIV.

Belongs to the major facilitator superfamily. Sugar transporter (TC 2.A.1.1) family.

The protein localises to the membrane. In Arabidopsis thaliana (Mouse-ear cress), this protein is D-xylose-proton symporter-like 2.